The following is a 284-amino-acid chain: 2-dehydro-3-deoxyphosphooctonate aldolase (284 aa).

This sequence belongs to the KdsA family.

It localises to the cytoplasm. It catalyses the reaction D-arabinose 5-phosphate + phosphoenolpyruvate + H2O = 3-deoxy-alpha-D-manno-2-octulosonate-8-phosphate + phosphate. It participates in carbohydrate biosynthesis; 3-deoxy-D-manno-octulosonate biosynthesis; 3-deoxy-D-manno-octulosonate from D-ribulose 5-phosphate: step 2/3. The protein operates within bacterial outer membrane biogenesis; lipopolysaccharide biosynthesis. This is 2-dehydro-3-deoxyphosphooctonate aldolase from Haemophilus influenzae (strain 86-028NP).